The chain runs to 213 residues: ATP phosphoribosyltransferase (213 aa).

It belongs to the ATP phosphoribosyltransferase family. Short subfamily. As to quaternary structure, heteromultimer composed of HisG and HisZ subunits.

It localises to the cytoplasm. It catalyses the reaction 1-(5-phospho-beta-D-ribosyl)-ATP + diphosphate = 5-phospho-alpha-D-ribose 1-diphosphate + ATP. It functions in the pathway amino-acid biosynthesis; L-histidine biosynthesis; L-histidine from 5-phospho-alpha-D-ribose 1-diphosphate: step 1/9. Catalyzes the condensation of ATP and 5-phosphoribose 1-diphosphate to form N'-(5'-phosphoribosyl)-ATP (PR-ATP). Has a crucial role in the pathway because the rate of histidine biosynthesis seems to be controlled primarily by regulation of HisG enzymatic activity. In Listeria monocytogenes serovar 1/2a (strain ATCC BAA-679 / EGD-e), this protein is ATP phosphoribosyltransferase (hisG).